A 259-amino-acid polypeptide reads, in one-letter code: Haloacid dehalogenase-like hydrolase domain-containing protein 2 (259 aa).

Asp-13 and Asn-15 together coordinate Mg(2+). Residues 13–15 (DLN) and 46–47 (TN) each bind substrate. A coiled-coil region spans residues 47–72 (NTTKESKKDLLERLKKLEFEISEDEI). The residue at position 50 (Lys-50) is an N6-succinyllysine. Lys-179 lines the substrate pocket. Asp-204 lines the Mg(2+) pocket.

It belongs to the HAD-like hydrolase superfamily. The cofactor is Mg(2+).

This Mus musculus (Mouse) protein is Haloacid dehalogenase-like hydrolase domain-containing protein 2 (Hdhd2).